A 237-amino-acid chain; its full sequence is Large ribosomal subunit protein uL2 (237 aa).

The interval 202–237 (FGGGNRKHPGKPTTVSRNAPPGRKVGHIAARRTGKR) is disordered. The segment covering 225–237 (KVGHIAARRTGKR) has biased composition (basic residues).

It belongs to the universal ribosomal protein uL2 family. As to quaternary structure, part of the 50S ribosomal subunit. Forms a bridge to the 30S subunit in the 70S ribosome.

One of the primary rRNA binding proteins. Required for association of the 30S and 50S subunits to form the 70S ribosome, for tRNA binding and peptide bond formation. It has been suggested to have peptidyltransferase activity; this is somewhat controversial. Makes several contacts with the 16S rRNA in the 70S ribosome. This chain is Large ribosomal subunit protein uL2, found in Methanococcoides burtonii (strain DSM 6242 / NBRC 107633 / OCM 468 / ACE-M).